Reading from the N-terminus, the 426-residue chain is tRNA(Met) cytidine acetate ligase (426 aa).

Residues 7–20, Gly101, Asn168, and Arg193 each bind ATP; that span reads VVEYNPFHNGHLFH.

This sequence belongs to the TmcAL family.

The protein resides in the cytoplasm. It catalyses the reaction cytidine(34) in elongator tRNA(Met) + acetate + ATP = N(4)-acetylcytidine(34) in elongator tRNA(Met) + AMP + diphosphate. In terms of biological role, catalyzes the formation of N(4)-acetylcytidine (ac(4)C) at the wobble position of elongator tRNA(Met), using acetate and ATP as substrates. First activates an acetate ion to form acetyladenylate (Ac-AMP) and then transfers the acetyl group to tRNA to form ac(4)C34. The chain is tRNA(Met) cytidine acetate ligase from Kosmotoga olearia (strain ATCC BAA-1733 / DSM 21960 / TBF 19.5.1).